Reading from the N-terminus, the 360-residue chain is Squamosa promoter-binding-like protein 7 (360 aa).

Over residues alanine 74–alanine 89 the composition is skewed to gly residues. A disordered region spans residues alanine 74–alanine 98. An SBP-type zinc finger spans residues valine 105–serine 182. Residues cysteine 108, cysteine 113, cysteine 130, histidine 133, cysteine 149, cysteine 152, histidine 156, and cysteine 168 each contribute to the Zn(2+) site. The Bipartite nuclear localization signal motif lies at lysine 165 to arginine 181. Positions leucine 172–serine 182 are enriched in basic residues. Disordered stretches follow at residues leucine 172–histidine 196, phenylalanine 261–glutamine 306, and threonine 318–valine 360.

Expressed in young panicles.

It localises to the nucleus. Functionally, trans-acting factor that binds specifically to the consensus nucleotide sequence 5'-TNCGTACAA-3'. May be involved in panicle development. In Oryza sativa subsp. japonica (Rice), this protein is Squamosa promoter-binding-like protein 7 (SPL7).